The primary structure comprises 262 residues: MSLKINNFNFLRPISRKKHRKKIKLNCLNLPFKGKDIWTLYELSWLNKNGLPQIAIAKIEIDVNSANIIESKSFKIYINSFNQMKFNNNIDFINILTNDLTKCICGQISIKLFSLDAIKNETITDFHGICIDNQNIKIESYKYTPSFLMINSERKIIKEDLYTHLFKSNCPVTQQPDWASIYIAYTGLSINHASLLRYLISFRSHNEFHEECIERIFNDINNICKPEELSVYARYTRRGGIDINPWRSNTNFSPFLTRLARQ.

Substrate is bound at residue 69-71 (IES). 71–72 (SK) contacts NADPH. Cys170 (thioimide intermediate) is an active-site residue. The Proton donor role is filled by Asp177. Residue 209-210 (HE) coordinates substrate. 238–239 (RG) contacts NADPH.

This sequence belongs to the GTP cyclohydrolase I family. QueF type 2 subfamily. Homodimer.

Its subcellular location is the cytoplasm. The catalysed reaction is 7-aminomethyl-7-carbaguanine + 2 NADP(+) = 7-cyano-7-deazaguanine + 2 NADPH + 3 H(+). The protein operates within tRNA modification; tRNA-queuosine biosynthesis. In terms of biological role, catalyzes the NADPH-dependent reduction of 7-cyano-7-deazaguanine (preQ0) to 7-aminomethyl-7-deazaguanine (preQ1). The protein is NADPH-dependent 7-cyano-7-deazaguanine reductase of Buchnera aphidicola subsp. Schizaphis graminum (strain Sg).